The sequence spans 382 residues: Alkanesulfonate monooxygenase (382 aa).

Belongs to the SsuD family. In terms of assembly, homotetramer.

The enzyme catalyses an alkanesulfonate + FMNH2 + O2 = an aldehyde + FMN + sulfite + H2O + 2 H(+). Functionally, catalyzes the desulfonation of aliphatic sulfonates. This is Alkanesulfonate monooxygenase from Yersinia pseudotuberculosis serotype IB (strain PB1/+).